The following is a 232-amino-acid chain: Ion-translocating oxidoreductase complex subunit E (232 aa).

A run of 6 helical transmembrane segments spans residues 12 to 31 (LWRN…LLAV), 39 to 59 (LGLG…VSAL), 69 to 89 (IPIY…LINA), 92 to 112 (FGLY…CIVI), 125 to 145 (ALAA…LLLL), and 182 to 202 (PFLL…MLVG).

This sequence belongs to the NqrDE/RnfAE family. As to quaternary structure, the complex is composed of six subunits: RnfA, RnfB, RnfC, RnfD, RnfE and RnfG.

It localises to the cell inner membrane. In terms of biological role, part of a membrane-bound complex that couples electron transfer with translocation of ions across the membrane. The chain is Ion-translocating oxidoreductase complex subunit E from Sodalis glossinidius (strain morsitans).